An 821-amino-acid chain; its full sequence is Tip elongation aberrant protein Tea4 (821 aa).

Composition is skewed to polar residues over residues 1 to 11 and 21 to 31; these read MLHMNSASSAD and DPTQQNDSTII. Residues 1-36 form a disordered region; that stretch reads MLHMNSASSADSMEIMESHFDPTQQNDSTIIESRYS. Residue Y35 is modified to Phosphotyrosine. S36 carries the post-translational modification Phosphoserine. At Y40 the chain carries Phosphotyrosine. The tract at residues 51–79 is disordered; the sequence is ISGENSEPQTVASQEISDSQEEDTTLTSS. Polar residues predominate over residues 53–67; sequence GENSEPQTVASQEIS. An SH3 domain is found at 130–191; it reads IDCNFVHAIR…PAEYIETPSE (62 aa). 5 disordered regions span residues 267-292, 333-352, 473-500, 529-570, and 664-697; these read LEIE…DHVT, SSTT…FSSA, DSFD…MPNN, SPRL…SSLL, and DASS…SFSS. Residues 268 to 282 are compositionally biased toward low complexity; sequence EIEFSDSSDSSLSAE. Basic and acidic residues predominate over residues 283–292; that stretch reads YRSESEDHVT. Composition is skewed to polar residues over residues 333–350 and 473–484; these read SSTT…SKFS and DSFDTSNVTQDA. Residues 527–821 are interaction with tea1; the sequence is LLSPRLYSSS…EMASLLNTNR (295 aa). Positions 529-541 are enriched in low complexity; it reads SPRLYSSSTPSSP. Residues 554–563 show a composition bias toward basic and acidic residues; sequence ENRKQADKVE. The interval 599–821 is interaction with win1; it reads KAFSQSSIDL…EMASLLNTNR (223 aa). The span at 665–674 shows a compositional bias: low complexity; that stretch reads ASSAIPSSSI. Residues 675-687 show a composition bias toward basic and acidic residues; sequence SHDEDLLPRKNTE.

An essential component of the tea1 cell-end complex. Interacts with win1, tea1 and for3. Interacts with tip1 in the presence of tea1.

The protein resides in the cytoplasm. It localises to the cytoskeleton. Its function is as follows. Cell polarity factor essential for the bipolar localization and function of structures containing the cell-end marker tea1 during the normal cell cycle. Regulates cell polarity in complex with tea1 and together with the stress signaling MAPK cascade, contributes to cell polarity maintenance under stress conditions. Required for the localization of for3 at the cell tip specifically during initiation of bipolar growth. During the new end take off (NETO), formation of a protein complex that includes tea1, tea4 and for3 is necessary and sufficient for the establishment of cell polarity and localized actin assembly at new cell ends. This is Tip elongation aberrant protein Tea4 from Schizosaccharomyces pombe (strain 972 / ATCC 24843) (Fission yeast).